The following is a 414-amino-acid chain: Histidine--tRNA ligase (414 aa).

The protein belongs to the class-II aminoacyl-tRNA synthetase family. As to quaternary structure, homodimer.

The protein resides in the cytoplasm. The enzyme catalyses tRNA(His) + L-histidine + ATP = L-histidyl-tRNA(His) + AMP + diphosphate + H(+). The polypeptide is Histidine--tRNA ligase (Anaeromyxobacter dehalogenans (strain 2CP-1 / ATCC BAA-258)).